The following is a 343-amino-acid chain: Cytoplasmic tRNA 2-thiolation protein 1 (343 aa).

This sequence belongs to the TtcA family. CTU1/NCS6/ATPBD3 subfamily.

Its subcellular location is the cytoplasm. The protein operates within tRNA modification; 5-methoxycarbonylmethyl-2-thiouridine-tRNA biosynthesis. Its function is as follows. Plays a central role in 2-thiolation of mcm(5)S(2)U at tRNA wobble positions of tRNA(Lys), tRNA(Glu) and tRNA(Gln). Directly binds tRNAs and probably acts by catalyzing adenylation of tRNAs, an intermediate required for 2-thiolation. It is unclear whether it acts as a sulfurtransferase that transfers sulfur from thiocarboxylated URM1 onto the uridine of tRNAs at wobble position. This Drosophila erecta (Fruit fly) protein is Cytoplasmic tRNA 2-thiolation protein 1.